The chain runs to 341 residues: uncharacterized protein (341 aa).

58–82 is a binding site for NADP(+); that stretch reads ITGGSSGIGAAAAKKIAEAGGTVVL. Substrate is bound at residue Ser-194. Catalysis depends on Tyr-207, which acts as the Proton acceptor. The tract at residues 309–329 is disordered; it reads DSSAAKGSESQTDTSELDKRS.

This sequence belongs to the short-chain dehydrogenases/reductases (SDR) family.

This is an uncharacterized protein from Mycobacterium bovis (strain ATCC BAA-935 / AF2122/97).